The following is a 228-amino-acid chain: MKRRRLAQHFLRDPSVAEYIAGLVPSGLDVIEVGPGAGALTIPLAKRSKTVYAIEIDKALAERLRGIAPPNVVIIVGDALEVEWPRADFFVSNVPYSITSPLLFKLIRHRLPAVLTIQREVAERLVARPGSEDYGRLTVAVQCFYDVEILRVLPPYVFDPPPKVYSAVVRLMPKAPCVDNFDEFEKFSAWLFSARRKTLRRLKLADSTKRVYQLTLEELVELFKRHKA.

Positions 9, 11, 34, 55, 78, and 93 each coordinate S-adenosyl-L-methionine.

This sequence belongs to the class I-like SAM-binding methyltransferase superfamily. rRNA adenine N(6)-methyltransferase family. RsmA subfamily.

The protein resides in the cytoplasm. Functionally, specifically dimethylates two adjacent adenosines in the loop of a conserved hairpin near the 3'-end of 16S rRNA in the 30S particle. May play a critical role in biogenesis of 30S subunits. The sequence is that of Probable ribosomal RNA small subunit methyltransferase A from Pyrobaculum aerophilum (strain ATCC 51768 / DSM 7523 / JCM 9630 / CIP 104966 / NBRC 100827 / IM2).